A 149-amino-acid chain; its full sequence is Lipoprotein signal peptidase (149 aa).

2 helical membrane-spanning segments follow: residues 53 to 73 (MPGK…ALVI) and 89 to 109 (GLIA…GFVI). Active-site residues include aspartate 110 and aspartate 124. A helical membrane pass occupies residues 119–139 (VFNLADSAIVCGGILLLILVL).

It belongs to the peptidase A8 family.

It is found in the cell membrane. The catalysed reaction is Release of signal peptides from bacterial membrane prolipoproteins. Hydrolyzes -Xaa-Yaa-Zaa-|-(S,diacylglyceryl)Cys-, in which Xaa is hydrophobic (preferably Leu), and Yaa (Ala or Ser) and Zaa (Gly or Ala) have small, neutral side chains.. Its pathway is protein modification; lipoprotein biosynthesis (signal peptide cleavage). Its function is as follows. This protein specifically catalyzes the removal of signal peptides from prolipoproteins. In Syntrophomonas wolfei subsp. wolfei (strain DSM 2245B / Goettingen), this protein is Lipoprotein signal peptidase.